A 217-amino-acid chain; its full sequence is Probable transaldolase (217 aa).

The active-site Schiff-base intermediate with substrate is K83.

The protein belongs to the transaldolase family. Type 3B subfamily.

Its subcellular location is the cytoplasm. It carries out the reaction D-sedoheptulose 7-phosphate + D-glyceraldehyde 3-phosphate = D-erythrose 4-phosphate + beta-D-fructose 6-phosphate. It functions in the pathway carbohydrate degradation; pentose phosphate pathway; D-glyceraldehyde 3-phosphate and beta-D-fructose 6-phosphate from D-ribose 5-phosphate and D-xylulose 5-phosphate (non-oxidative stage): step 2/3. Its function is as follows. Transaldolase is important for the balance of metabolites in the pentose-phosphate pathway. The protein is Probable transaldolase of Brucella melitensis biotype 1 (strain ATCC 23456 / CCUG 17765 / NCTC 10094 / 16M).